We begin with the raw amino-acid sequence, 347 residues long: Phenylalanine--tRNA ligase alpha subunit (347 aa).

Mg(2+) is bound at residue E265.

The protein belongs to the class-II aminoacyl-tRNA synthetase family. Phe-tRNA synthetase alpha subunit type 1 subfamily. Tetramer of two alpha and two beta subunits. Mg(2+) serves as cofactor.

The protein localises to the cytoplasm. It catalyses the reaction tRNA(Phe) + L-phenylalanine + ATP = L-phenylalanyl-tRNA(Phe) + AMP + diphosphate + H(+). The protein is Phenylalanine--tRNA ligase alpha subunit of Mycolicibacterium vanbaalenii (strain DSM 7251 / JCM 13017 / BCRC 16820 / KCTC 9966 / NRRL B-24157 / PYR-1) (Mycobacterium vanbaalenii).